Here is a 997-residue protein sequence, read N- to C-terminus: Serine-repeat antigen protein 5 (997 aa).

The signal sequence occupies residues 1 to 22 (MKSYISLFFILCVIFNKNVIKC). 2 disordered regions span residues 26-107 (SQTG…EKQD) and 181-252 (LPSN…PRNL). Residues 30–51 (NTGGGQAGNTGGDQAGSTGGSP) are compositionally biased toward gly residues. A compositionally biased stretch (low complexity) spans 52–67 (QGSTGASPQGSTGASP). Polar residues predominate over residues 68 to 84 (QGSTGASQPGSSEPSNP). 3 stretches are compositionally biased toward low complexity: residues 85-103 (VSSG…STSS), 183-196 (SNGT…STGT), and 205-235 (SDSS…SSES). At Ser183 the chain carries Phosphoserine. A glycan (N-linked (GlcNAc...) asparagine) is linked at Asn184. An interaction with PTKL region spans residues 216–253 (SSSSSSSSSSSSSSSSSSESLPANGPDSPTVKPPRNLQ). Asn318 carries an N-linked (GlcNAc...) asparagine glycan. The segment at 373-390 (YKYLSEDIVSKFKEIKAE) is interaction with host VTN. Cysteines 445 and 497 form a disulfide. Thr549 carries the post-translational modification Phosphothreonine; by CPK1. 5 disulfides stabilise this stretch: Cys567/Cys572, Cys581/Cys610, Cys593/Cys636, Cys627/Cys672, and Cys755/Cys809. The segment at 579–997 (NNCISNLQVE…TNNECYFCYV (419 aa)) is thiol-protease-like. Active-site residues include His762 and Asn787. Asn828 is a glycosylation site (N-linked (GlcNAc...) asparagine). Residues 843–886 (KASPEFYHNLYFKNFNVGKKNLFSEKEDNENNKKLGNNYIIFGQ) constitute a propeptide, inhibition peptide. Phosphoserine is present on Ser866.

The protein belongs to the peptidase C1 family. As to quaternary structure, may interact (via C-terminus) with PTKL (via SAM domain). In terms of assembly, interacts (via C-terminus) with human VTN (via hemopexin repeat 2); may form heterotetramers of two VTN and SERA5 P47 heterodimers; the interaction may protect merozoites from phagocytosis by host monocytes; VTN glycosylation appears to be dispensable for the interaction. Monomer. Interacts with kinase CPK1/CDPK1 at the schizont stage. In terms of processing, phosphorylation by CPK1/CDPK1 increases SERA5 protease activity towards a synthetic peptide in vitro. Post-translationally, just prior to merozoite egress from host erythrocytes, proteolytically cleaved into multiple fragments. Cleaved by SUB1 into p47 and p73, p73 is further cleaved by SUB1 into p56 and p18 and p56 is further processed into p50 by an unidentified protease. p47 remains covalently associated with p18 via disulfide bond. p47 can be processed into p25n and p25c by SUB1. p25c and p25n remain associated with p18. Proteolytic processing is essential for merozoite egress from host erythrocytes. The cleavage of the propeptide to produce p50 is necessary for protease activity and to promote merozoite egress.

Its subcellular location is the parasitophorous vacuole. The protein resides in the secreted. It localises to the cell membrane. Plays an essential role during the asexual blood stage development by controlling the kinetics of merozoite egress from host erythrocytes. Specifically, prevents premature rupture of the parasitophorous vacuole and host erythrocyte membranes. Functionally, may prevent merozoite phagocytosis by host monocytes via interaction with host VTN at the merozoite surface. Plays a role in parasite growth. Its function is as follows. Protease activity is controversial. Has been shown in a number of studies to have protease activity towards a synthetic peptide in vitro. Has also been shown to lack protease activity towards a synthetic peptide in vitro. The chain is Serine-repeat antigen protein 5 from Plasmodium falciparum (isolate 3D7).